A 129-amino-acid chain; its full sequence is Large ribosomal subunit protein bL17 (129 aa).

This sequence belongs to the bacterial ribosomal protein bL17 family. In terms of assembly, part of the 50S ribosomal subunit. Contacts protein L32.

The polypeptide is Large ribosomal subunit protein bL17 (Polynucleobacter asymbioticus (strain DSM 18221 / CIP 109841 / QLW-P1DMWA-1) (Polynucleobacter necessarius subsp. asymbioticus)).